The primary structure comprises 289 residues: 4-hydroxy-tetrahydrodipicolinate synthase (289 aa).

Thr45 provides a ligand contact to pyruvate. The active-site Proton donor/acceptor is Tyr133. The active-site Schiff-base intermediate with substrate is the Lys161. Ile200 is a pyruvate binding site.

Belongs to the DapA family. In terms of assembly, homotetramer; dimer of dimers.

The protein resides in the cytoplasm. It catalyses the reaction L-aspartate 4-semialdehyde + pyruvate = (2S,4S)-4-hydroxy-2,3,4,5-tetrahydrodipicolinate + H2O + H(+). Its pathway is amino-acid biosynthesis; L-lysine biosynthesis via DAP pathway; (S)-tetrahydrodipicolinate from L-aspartate: step 3/4. In terms of biological role, catalyzes the condensation of (S)-aspartate-beta-semialdehyde [(S)-ASA] and pyruvate to 4-hydroxy-tetrahydrodipicolinate (HTPA). This Coxiella burnetii (strain Dugway 5J108-111) protein is 4-hydroxy-tetrahydrodipicolinate synthase.